Here is a 430-residue protein sequence, read N- to C-terminus: Adenylosuccinate synthetase (430 aa).

Residues Gly-12–Lys-18 and Gly-40–Thr-42 each bind GTP. The active-site Proton acceptor is the Asp-13. Mg(2+) is bound by residues Asp-13 and Gly-40. Residues Asp-13–Lys-16, Asn-38–His-41, Thr-128, Arg-142, Gln-223, Thr-238, and Arg-302 each bind IMP. The Proton donor role is filled by His-41. Thr-298 to Arg-304 provides a ligand contact to substrate. GTP is bound by residues Arg-304, Leu-330 to Asp-332, and Ser-412 to Gly-414.

Belongs to the adenylosuccinate synthetase family. As to quaternary structure, homodimer. Mg(2+) is required as a cofactor.

It localises to the cytoplasm. The enzyme catalyses IMP + L-aspartate + GTP = N(6)-(1,2-dicarboxyethyl)-AMP + GDP + phosphate + 2 H(+). The protein operates within purine metabolism; AMP biosynthesis via de novo pathway; AMP from IMP: step 1/2. Its function is as follows. Plays an important role in the de novo pathway of purine nucleotide biosynthesis. Catalyzes the first committed step in the biosynthesis of AMP from IMP. The polypeptide is Adenylosuccinate synthetase (Listeria monocytogenes serovar 1/2a (strain ATCC BAA-679 / EGD-e)).